A 426-amino-acid chain; its full sequence is Enolase (426 aa).

Residue glutamine 163 coordinates (2R)-2-phosphoglycerate. Residue glutamate 205 is the Proton donor of the active site. 3 residues coordinate Mg(2+): aspartate 242, glutamate 286, and aspartate 313. Positions 338, 367, 368, and 389 each coordinate (2R)-2-phosphoglycerate. Lysine 338 serves as the catalytic Proton acceptor.

It belongs to the enolase family. It depends on Mg(2+) as a cofactor.

The protein localises to the cytoplasm. It localises to the secreted. The protein resides in the cell surface. It catalyses the reaction (2R)-2-phosphoglycerate = phosphoenolpyruvate + H2O. It participates in carbohydrate degradation; glycolysis; pyruvate from D-glyceraldehyde 3-phosphate: step 4/5. Its function is as follows. Catalyzes the reversible conversion of 2-phosphoglycerate (2-PG) into phosphoenolpyruvate (PEP). It is essential for the degradation of carbohydrates via glycolysis. The sequence is that of Enolase from Helicobacter pylori (strain J99 / ATCC 700824) (Campylobacter pylori J99).